Here is a 143-residue protein sequence, read N- to C-terminus: Transcriptional regulator MraZ (143 aa).

SpoVT-AbrB domains follow at residues 5–47 (EYSH…PQKE) and 76–119 (AAEC…SQEL).

Belongs to the MraZ family. Forms oligomers.

It is found in the cytoplasm. The protein resides in the nucleoid. The chain is Transcriptional regulator MraZ from Carboxydothermus hydrogenoformans (strain ATCC BAA-161 / DSM 6008 / Z-2901).